Reading from the N-terminus, the 501-residue chain is Zinc finger protein 704 (501 aa).

Over residues 80–96 the composition is skewed to polar residues; it reads SLKSTCNGGQRDGLTQG. 3 disordered regions span residues 80–138, 183–203, and 216–267; these read SLKS…HTRS, PLVRSPPVKVSEGLNGSWKDG, and WSWS…LFDE. Over residues 115–137 the composition is skewed to basic and acidic residues; that stretch reads EEPRVLEHKRTGRALETEKDHTR. The C2H2-type zinc-finger motif lies at 281-306; it reads FKCLWKNCGKVLSTAAGIQRHIRTVH. 4 disordered regions span residues 340–380, 398–419, 427–446, and 453–472; these read SLSP…SRSA, PVTIPSTSSTGFTPSSSSFSIS, FTGTSASPTHSRTQGFGEQH, and LSSPPRAAGSLSRKSRGEGK. Residues 368–380 are compositionally biased toward low complexity; that stretch reads SESSSSTPLSRSA. A CR1 motif is present at residues 472–476; the sequence is KKCRK. A CR2 motif is present at residues 490 to 494; it reads CRWKK.

Its subcellular location is the nucleus. Its function is as follows. Transcription factor. This is Zinc finger protein 704 (znf704) from Danio rerio (Zebrafish).